A 285-amino-acid polypeptide reads, in one-letter code: MKKTLIALAIAASAASGMAHAWMTGDFNGSVDIGGSITADDYRQKWEWKVGTGLNGFGNVLNDLTNGGTKLTITVTGNKPILLGRTKEAFATPVSGGVDGIPQIAFTDYEGASVKLRNTDGETNKGLAYFVLPMKNAEGTKVGSVKVNASYAGVFGKGGVTSADGELFSLFADGLRAIFYGGLTTTVSGAALTSGSAAAARTELFGSLSRNDILGQIQRVNANITSLVDVAGSYREDMEYTDGTVVSAAYALGIANGQTIEATFNQAVTTSTQWSAPLNVAITYY.

The signal sequence occupies residues 1-21 (MKKTLIALAIAASAASGMAHA).

It belongs to the fimbrial K88 protein family. As to quaternary structure, K88 fimbria, 0.1-1 micrometer in length and 7 nanometers in diameter, is composed of about 100 identical subunits.

It is found in the fimbrium. Functionally, K88 major fimbrial subunit. Fimbriae (also called pili), are polar filaments radiating from the surface of the bacterium to a length of 0.5-1.5 micrometers and numbering 100-300 per cell. They enable bacteria to colonize the epithelium of specific host organs. This is K88 fimbrial protein AB (faeG) from Escherichia coli.